The sequence spans 346 residues: L-malyl-CoA/beta-methylmalyl-CoA lyase (346 aa).

Positions 148 and 177 each coordinate Mg(2+). Residues 176–177 (VD) and 253–254 (LH) contribute to the substrate site.

Belongs to the HpcH/HpaI aldolase family. Mg(2+) serves as cofactor. The cofactor is Mn(2+).

It catalyses the reaction (S)-malyl-CoA = glyoxylate + acetyl-CoA. The catalysed reaction is (2R,3S)-beta-methylmalyl-CoA = propanoyl-CoA + glyoxylate. Its function is as follows. Involved in the methylaspartate cycle. Catalyzes the reversible cleavage of beta-methylmalyl-CoA to propionyl-CoA and glyoxylate, as well as the reversible cleavage of (S)-malyl-CoA to acetyl-CoA and glyoxylate. In addition, it has a small malyl-CoA thioesterase activity. It can also catalyze the cleavage of (S)-citramalyl-CoA to acetyl-CoA and pyruvate. The sequence is that of L-malyl-CoA/beta-methylmalyl-CoA lyase (citE1) from Haloarcula marismortui (strain ATCC 43049 / DSM 3752 / JCM 8966 / VKM B-1809) (Halobacterium marismortui).